The chain runs to 90 residues: Probable Fe(2+)-trafficking protein (90 aa).

This sequence belongs to the Fe(2+)-trafficking protein family.

Its function is as follows. Could be a mediator in iron transactions between iron acquisition and iron-requiring processes, such as synthesis and/or repair of Fe-S clusters in biosynthetic enzymes. The polypeptide is Probable Fe(2+)-trafficking protein (Coxiella burnetii (strain CbuK_Q154) (Coxiella burnetii (strain Q154))).